The sequence spans 556 residues: Zinc finger protein GLI1 (556 aa).

Disordered stretches follow at residues 57–83 (TEHPGGAADGSRFSTPRGAGKLGKKRA), 133–178 (SLGY…TPAR), and 200–222 (KYPEEKSEGDISSPASTGTQDPL). A compositionally biased stretch (low complexity) spans 135 to 148 (GYQNPPGQQKGQGQ). C2H2-type zinc fingers lie at residues 247–272 (TNCYWDGCAKEFDTQEQLVHHINNEH), 280–307 (FVCHWAACSREQRPFKAQYMLVVHMRRH), 313–337 (HKCTFEGCNKAYSRLENLKTHLRSH), 343–368 (YVCEHEGCNKAFSNASDRAKHQNRTH), and 374–399 (YICKIPGCTKRYTDPSSLRKHVKTVH). The tract at residues 295-303 (KAQYMLVVH) is interaction with DNA. 2 interaction with DNA regions span residues 357 to 362 (ASDRAK) and 387 to 393 (DPSSLRK). Residues 387–492 (DPSSLRKHVK…VEMTGNTGGS (106 aa)) form a disordered region. A compositionally biased stretch (low complexity) spans 454–472 (SKPQPSPGGQSSCSSDRSP).

This sequence belongs to the GLI C2H2-type zinc-finger protein family.

Its subcellular location is the cytoplasm. It localises to the nucleus. Its function is as follows. Acts as a transcriptional activator. Binds to the DNA consensus sequence 5'-GACCACCCA-3'. May regulate the transcription of specific genes during normal development. May play a role in craniofacial development and digital development, as well as development of the central nervous system and gastrointestinal tract. Mediates SHH signaling. Plays a role in cell proliferation and differentiation via its role in SHH signaling. The protein is Zinc finger protein GLI1 (GLI1) of Gallus gallus (Chicken).